The chain runs to 155 residues: Protein-export protein SecB (155 aa).

The protein belongs to the SecB family. In terms of assembly, homotetramer, a dimer of dimers. One homotetramer interacts with 1 SecA dimer.

It localises to the cytoplasm. One of the proteins required for the normal export of preproteins out of the cell cytoplasm. It is a molecular chaperone that binds to a subset of precursor proteins, maintaining them in a translocation-competent state. It also specifically binds to its receptor SecA. The protein is Protein-export protein SecB of Cronobacter sakazakii (strain ATCC BAA-894) (Enterobacter sakazakii).